Reading from the N-terminus, the 441-residue chain is MSGTGQSDDPRELKAGGSLQGRVKVPGDKSISHRSLLFGAIAEGTTTIDGLLPAEDPLSTAACLRAMGVSISPITDGGIVTVEGVGVDGLQEPAEVLDCGNSGTTMRLMLGLLAGRDGRHFVLDGDASLRRRPMRRVGQPLASMGAEVRGRDGGNLAPLAVQGRQLKGTVIGTPVASAQVKSALLLAALTAESPTTVIEPAQSRDHSERMLKAFGADLTVGGEIGRHISVRPGATLQGKNVVVPGDISSAAFWLVAGALIPGADLTIENVGLNPTRTGILEVLEQMGALIEVLNPRDVAGEPVGDLRVTHGPLKPFNFGEEIMPSLVDEVPILSVAACFCEGESRISGASELRVKETDRLAVMARQLKAMGADIDEHEDGMTIRGGRPLKGAALDSETDHRVAMSLGVAAMLADGNSSLARSEAAAVSYPSFWDELERLRC.

The tract at residues M1 to K24 is disordered. 3 residues coordinate 3-phosphoshikimate: K29, S30, and R34. K29 is a binding site for phosphoenolpyruvate. Residues G103 and R132 each contribute to the phosphoenolpyruvate site. Residues S177, Q179, D328, and K355 each coordinate 3-phosphoshikimate. Residue Q179 participates in phosphoenolpyruvate binding. The active-site Proton acceptor is D328. Residues R359 and R401 each coordinate phosphoenolpyruvate.

Belongs to the EPSP synthase family. Monomer.

Its subcellular location is the cytoplasm. The enzyme catalyses 3-phosphoshikimate + phosphoenolpyruvate = 5-O-(1-carboxyvinyl)-3-phosphoshikimate + phosphate. The protein operates within metabolic intermediate biosynthesis; chorismate biosynthesis; chorismate from D-erythrose 4-phosphate and phosphoenolpyruvate: step 6/7. Catalyzes the transfer of the enolpyruvyl moiety of phosphoenolpyruvate (PEP) to the 5-hydroxyl of shikimate-3-phosphate (S3P) to produce enolpyruvyl shikimate-3-phosphate and inorganic phosphate. The polypeptide is 3-phosphoshikimate 1-carboxyvinyltransferase (Synechococcus sp. (strain CC9605)).